Consider the following 155-residue polypeptide: uncharacterized protein (155 aa).

Transmembrane regions (helical) follow at residues T2–F24, A62–L84, V97–V116, and V131–N148.

The protein resides in the cell membrane. This is an uncharacterized protein from Aquifex aeolicus (strain VF5).